Here is a 171-residue protein sequence, read N- to C-terminus: Serine acetyltransferase (171 aa).

It belongs to the transferase hexapeptide repeat family.

The protein resides in the cytoplasm. The enzyme catalyses L-serine + acetyl-CoA = O-acetyl-L-serine + CoA. It functions in the pathway amino-acid biosynthesis; L-cysteine biosynthesis; L-cysteine from L-serine: step 1/2. The chain is Serine acetyltransferase (cysE) from Helicobacter pylori (strain ATCC 700392 / 26695) (Campylobacter pylori).